A 234-amino-acid chain; its full sequence is Enolase-phosphatase E1 (234 aa).

Asp-10 and Glu-12 together coordinate Mg(2+). Substrate is bound by residues Ser-125–Ser-126 and Lys-162. Residue Asp-188 participates in Mg(2+) binding.

It belongs to the HAD-like hydrolase superfamily. MasA/MtnC family. Monomer. The cofactor is Mg(2+).

It localises to the cytoplasm. The protein resides in the nucleus. It carries out the reaction 5-methylsulfanyl-2,3-dioxopentyl phosphate + H2O = 1,2-dihydroxy-5-(methylsulfanyl)pent-1-en-3-one + phosphate. It functions in the pathway amino-acid biosynthesis; L-methionine biosynthesis via salvage pathway; L-methionine from S-methyl-5-thio-alpha-D-ribose 1-phosphate: step 3/6. Its pathway is amino-acid biosynthesis; L-methionine biosynthesis via salvage pathway; L-methionine from S-methyl-5-thio-alpha-D-ribose 1-phosphate: step 4/6. Functionally, bifunctional enzyme that catalyzes the enolization of 2,3-diketo-5-methylthiopentyl-1-phosphate (DK-MTP-1-P) into the intermediate 2-hydroxy-3-keto-5-methylthiopentenyl-1-phosphate (HK-MTPenyl-1-P), which is then dephosphorylated to form the acireductone 1,2-dihydroxy-3-keto-5-methylthiopentene (DHK-MTPene). This is Enolase-phosphatase E1 from Sordaria macrospora (strain ATCC MYA-333 / DSM 997 / K(L3346) / K-hell).